We begin with the raw amino-acid sequence, 4981 residues long: Protocadherin Fat 4 (4981 aa).

Residues 1 to 42 (MNLAANRAPGRRRLPLPSPSLCQLLRVWGLLSLLPGSARVQA) form the signal peptide. The Extracellular portion of the chain corresponds to 43-4505 (AEQRQVFQVM…PDEISLPLWA (4463 aa)). Cadherin domains lie at 44 to 135 (EQRQ…APVF), 136 to 250 (PDPS…PPVF), 251 to 353 (GSSH…DPVV), 359 to 475 (PATS…PPVF), 476 to 582 (EQQV…KPVF), 584 to 689 (QPEG…SPVF), 690 to 793 (YPVQ…PPVF), 794 to 893 (SQAA…APHF), 894 to 996 (LQAV…PPVF), 997 to 1100 (DQIS…RPLF), 1101 to 1210 (NSTN…APKF), 1211 to 1315 (LKDF…TPSF), 1316 to 1420 (PKST…PPSF), 1421 to 1529 (PPGD…VPMF), 1529 to 1629 (FISQ…GPVF), 1630 to 1740 (TQTK…PPVF), 1741 to 1841 (PTDT…TPRF), 1842 to 1944 (SRPV…PPVF), 1945 to 2051 (SMSS…PPMF), 2051 to 2154 (FLSP…NPVF), 2155 to 2259 (AQAM…VPVF), 2260 to 2364 (ELSP…VPTF), 2365 to 2468 (ANNM…PPRF), 2469 to 2569 (QHHP…FPKV), 2570 to 2671 (RAKE…APTF), 2672 to 2775 (EEDP…APRF), 2775 to 2874 (FSQI…TPRF), 2875 to 2985 (SRPS…PPQF), 2986 to 3091 (LQNK…TPEF), 3092 to 3196 (SQNH…SPVF), 3197 to 3300 (VPDE…VPRF), 3301 to 3406 (VSKL…PPVF), 3407 to 3512 (SLST…GPVL), and 3511 to 3622 (VLTV…VEIF). Residues asparagine 84 and asparagine 237 are each glycosylated (N-linked (GlcNAc...) asparagine). Residues asparagine 393, asparagine 416, asparagine 435, asparagine 483, asparagine 551, asparagine 615, asparagine 676, asparagine 721, asparagine 825, asparagine 880, asparagine 948, asparagine 1085, asparagine 1101, asparagine 1104, asparagine 1225, asparagine 1296, asparagine 1389, and asparagine 1514 are each glycosylated (N-linked (GlcNAc...) asparagine). Asparagine 1828, asparagine 1899, asparagine 1967, and asparagine 2119 each carry an N-linked (GlcNAc...) asparagine glycan. N-linked (GlcNAc...) asparagine glycans are attached at residues asparagine 2387 and asparagine 2432. 7 N-linked (GlcNAc...) asparagine glycosylation sites follow: asparagine 2923, asparagine 2939, asparagine 3038, asparagine 3142, asparagine 3219, asparagine 3394, and asparagine 3479. Residues asparagine 3708 and asparagine 3760 are each glycosylated (N-linked (GlcNAc...) asparagine). Residues 3804 to 3862 (DHDPCIHGPCQNGGSCLRRLAVGSALKIQESLPVIIVANEPLQPSQCKCVPGYAGSWCE) enclose the EGF-like 1 domain. Cystine bridges form between cysteine 3808/cysteine 3819, cysteine 3813/cysteine 3850, cysteine 3852/cysteine 3861, cysteine 3868/cysteine 3879, cysteine 3873/cysteine 3888, cysteine 3890/cysteine 3899, cysteine 3906/cysteine 3917, cysteine 3911/cysteine 3926, cysteine 3928/cysteine 3937, cysteine 3944/cysteine 3955, cysteine 3949/cysteine 3964, and cysteine 3966/cysteine 3975. The region spanning 3864-3900 (DIDECLPAPCHNGGTCHNLVGGFSCSCPEGFTGRACE) is the EGF-like 2; calcium-binding domain. An EGF-like 3; calcium-binding domain is found at 3902–3938 (DINECLPSPCKHGAVCQNFPGGFNCVCKTGYTGKMCE). In terms of domain architecture, EGF-like 4 spans 3940 to 3976 (SVNYCECNPCFNGGSCQSGVESYYCHCPFGVFGKHCE). The region spanning 3977 to 4161 (LNSYGFEELS…LAAQGILDQC (185 aa)) is the Laminin G-like 1 domain. N-linked (GlcNAc...) asparagine glycosylation is present at asparagine 4019. 4 cysteine pairs are disulfide-bonded: cysteine 4135–cysteine 4161, cysteine 4168–cysteine 4179, cysteine 4173–cysteine 4188, and cysteine 4190–cysteine 4199. Residues 4164–4200 (LEGTCARNPCQHGGTCVDFWSWQQCQCMEGLTGKYCE) enclose the EGF-like 5 domain. The Laminin G-like 2 domain maps to 4219–4399 (YHMSQSEKRE…KTDPSVKIGC (181 aa)). Residues asparagine 4269 and asparagine 4314 are each glycosylated (N-linked (GlcNAc...) asparagine). 4 cysteine pairs are disulfide-bonded: cysteine 4366/cysteine 4399, cysteine 4431/cysteine 4442, cysteine 4436/cysteine 4452, and cysteine 4454/cysteine 4463. The EGF-like 6 domain occupies 4427-4464 (PPGDCASHPCQNGGSCEPGLLSGYTCSCPESHTGRTCE). Residues 4506–4526 (VPAIVGSCATALALLVLSLIL) traverse the membrane as a helical segment. Residues 4527–4981 (CNQCRGKMPK…AKDGEAEQYV (455 aa)) lie on the Cytoplasmic side of the membrane. 5 disordered regions span residues 4535–4585 (PKNP…PDII), 4677–4713 (PSSY…KPSA), 4753–4773 (RRSK…SRLK), 4796–4911 (RLNT…PAAA), and 4957–4981 (AAGN…EQYV). The segment covering 4677–4701 (PSSYGQGLRTSSLSHSACPTPNPLS) has biased composition (polar residues). Positions 4708–4797 (FSKPSAFYRN…GLSIEEVERL (90 aa)) are necessary and sufficient for interaction with MPDZ. Residues 4811–4823 (DHGRSSSEEDCRR) are compositionally biased toward basic and acidic residues. Position 4878 is a phosphoserine (serine 4878). Residues 4971–4981 (AAKDGEAEQYV) are compositionally biased toward basic and acidic residues.

As to quaternary structure, heterophilic interaction with DCHS1; this interaction affects their respective protein levels. Interacts (via cytoplasmic domain) with MPDZ. Forms a complex with PALS1 and MPDZ. As to expression, widely expressed.

It localises to the membrane. Functionally, cadherins are cell-cell interaction molecules. FAT4 plays a role in the maintenance of planar cell polarity as well as in inhibition of YAP1-mediated neuroprogenitor cell proliferation and differentiation. The chain is Protocadherin Fat 4 (Fat4) from Mus musculus (Mouse).